A 55-amino-acid polypeptide reads, in one-letter code: Conotoxin vc5b (55 aa).

Residues 1–15 (VILLLLIASAPSVDA) form the signal peptide. The propeptide occupies 16 to 41 (QPKTKDDVPLAPLHDNAKSALQHLNQ). A Glutamine amide modification is found at Gln53.

Post-translationally, contains 2 disulfide bonds that can be either 'C1-C3, C2-C4' or 'C1-C4, C2-C3', since these disulfide connectivities have been observed for conotoxins with cysteine framework V (for examples, see AC P0DQQ7 and AC P81755). As to expression, expressed by the venom duct.

The protein localises to the secreted. The sequence is that of Conotoxin vc5b from Conus victoriae (Queen Victoria cone).